Reading from the N-terminus, the 282-residue chain is Bis(5'-nucleosyl)-tetraphosphatase, symmetrical (282 aa).

The protein belongs to the Ap4A hydrolase family. Monomer.

It carries out the reaction P(1),P(4)-bis(5'-adenosyl) tetraphosphate + H2O = 2 ADP + 2 H(+). Functionally, hydrolyzes diadenosine 5',5'''-P1,P4-tetraphosphate to yield ADP. This chain is Bis(5'-nucleosyl)-tetraphosphatase, symmetrical, found in Escherichia coli O157:H7.